The chain runs to 357 residues: U5 small nuclear ribonucleoprotein 40 kDa protein (357 aa).

Lys18 participates in a covalent cross-link: Glycyl lysine isopeptide (Lys-Gly) (interchain with G-Cter in SUMO2). At Arg21 the chain carries Asymmetric dimethylarginine. 7 WD repeats span residues 64–103 (GHEG…DNYA), 107–146 (GHSG…RVKR), 149–189 (GHTS…AIQT), 191–230 (QNTY…LTYT), 233–272 (GHAD…PKER), 283–322 (NFEK…ILYK), and 325–357 (GHAG…GEIQ). Lys270 is covalently cross-linked (Glycyl lysine isopeptide (Lys-Gly) (interchain with G-Cter in SUMO2)).

As to quaternary structure, component of the pre-catalytic and catalytic spliceosome complexes. Component of the postcatalytic spliceosome P complex. Part of the U5 snRNP complex. Interacts with PRPF8. Component of the U4/U6-U5 tri-snRNP complex composed of the U4, U6 and U5 snRNAs and at least PRPF3, PRPF4, PRPF6, PRPF8, PRPF31, SNRNP200, TXNL4A, WDR57, SNRNP40, DDX23, CD2BP2, PPIH, SNU13, EFTUD2, SART1 and USP39. Component of the minor spliceosome, which splices U12-type introns.

The protein resides in the nucleus. Its function is as follows. Required for pre-mRNA splicing as component of the activated spliceosome. Component of the U5 small nuclear ribonucleoprotein (snRNP) complex and the U4/U6-U5 tri-snRNP complex, building blocks of the spliceosome. As a component of the minor spliceosome, involved in the splicing of U12-type introns in pre-mRNAs. The protein is U5 small nuclear ribonucleoprotein 40 kDa protein (SNRNP40) of Homo sapiens (Human).